A 524-amino-acid polypeptide reads, in one-letter code: Solute carrier family 35 member F5 (524 aa).

Positions 1-22 (MVPPRHHPGAGRPGALSSSPPF) are disordered. Residues 13–22 (PGALSSSPPF) are compositionally biased toward low complexity. 2 helical membrane passes run 69 to 89 (MALG…SSEL) and 101 to 121 (FFST…FIVW). Ser207 carries the phosphoserine modification. 8 helical membrane passes run 244–264 (ISFF…EALS), 269–289 (AIVN…AAMF), 297–317 (FTLS…LVNL), 328–348 (TIGS…IVMI), 362–382 (MFFG…FFLL), 396–416 (VVLM…EFLW), 421–441 (FLTS…LSII), and 453–473 (WLFF…TLLC). In terms of domain architecture, EamA spans 253–317 (FLANFSYQEA…SIGGVVLVNL (65 aa)).

It belongs to the SLC35F solute transporter family.

It is found in the membrane. Its function is as follows. Putative solute transporter. In Bos taurus (Bovine), this protein is Solute carrier family 35 member F5 (SLC35F5).